Consider the following 651-residue polypeptide: Protein transport protein SEC9 (651 aa).

Disordered stretches follow at residues 1–22, 53–299, and 313–332; these read MGLK…QNKD, AEDK…QAPM, and RNSE…DFEE. Phosphoserine is present on residues Ser79 and Ser92. The span at 86 to 112 shows a compositional bias: polar residues; that stretch reads NEATAGSNRGSSGTQDLGNGAESNSMQ. Basic and acidic residues predominate over residues 120–129; the sequence is DDYRYDDDPY. 2 stretches are compositionally biased toward polar residues: residues 157–218 and 244–284; these read GTSL…SLDQ and DSNT…ANPY. Phosphoserine is present on residues Ser186, Ser190, Ser213, Ser271, and Ser273. The span at 285-296 shows a compositional bias: low complexity; it reads SSRSVRQPQSQQ. Residues 313–327 are compositionally biased toward basic and acidic residues; it reads RNSEVDLNEEPRTGE. Ser315 is subject to Phosphoserine. Phosphothreonine is present on Thr355. Ser359 is modified (phosphoserine). T-SNARE coiled-coil homology domains are found at residues 434 to 496 and 588 to 650; these read KFTK…VAEL and DEME…LAGI.

This sequence belongs to the SNAP-25 family. As to quaternary structure, interacts with SRO7 and SRO77.

Component of a SNARE complex that may be the effector of SEC4 function in exocytosis. This Saccharomyces cerevisiae (strain ATCC 204508 / S288c) (Baker's yeast) protein is Protein transport protein SEC9 (SEC9).